The sequence spans 180 residues: ADP-ribosylation factor 1 (180 aa).

G2 is lipidated: N-myristoyl glycine. GTP contacts are provided by residues 24–31 (GLDAAGKT), 67–71 (DVGGQ), and 126–129 (NKQD).

Belongs to the small GTPase superfamily. Arf family.

Its subcellular location is the golgi apparatus. The enzyme catalyses GTP + H2O = GDP + phosphate + H(+). Functionally, GTP-binding protein involved in protein trafficking; may modulate vesicle budding and uncoating within the Golgi apparatus. The chain is ADP-ribosylation factor 1 (arf1) from Schizosaccharomyces pombe (strain 972 / ATCC 24843) (Fission yeast).